A 199-amino-acid polypeptide reads, in one-letter code: A-type ATP synthase subunit E (199 aa).

It belongs to the V-ATPase E subunit family. Has multiple subunits with at least A(3), B(3), C, D, E, F, H, I and proteolipid K(x).

It is found in the cell membrane. Component of the A-type ATP synthase that produces ATP from ADP in the presence of a proton gradient across the membrane. This is A-type ATP synthase subunit E from Pyrococcus abyssi (strain GE5 / Orsay).